The primary structure comprises 106 residues: UPF0473 protein SSU98_0068 (106 aa).

This sequence belongs to the UPF0473 family.

The chain is UPF0473 protein SSU98_0068 from Streptococcus suis (strain 98HAH33).